Consider the following 157-residue polypeptide: uncharacterized protein (157 aa).

4 helical membrane-spanning segments follow: residues 29–49, 52–72, 93–113, and 117–137; these read LLII…PAYF, VLHV…GFGI, LGSV…RTWL, and NEMF…TITA.

It localises to the cell membrane. This is an uncharacterized protein from Bacillus subtilis (strain 168).